A 2090-amino-acid chain; its full sequence is Non-reducing polyketide synthase rdc1 (2090 aa).

The interval Phe12–His250 is N-terminal acylcarrier protein transacylase (SAT) domain. Residues Thr375–Asp808 form the Ketosynthase family 3 (KS3) domain. Residues Cys551, His686, and His726 each act as for beta-ketoacyl synthase activity in the active site. Residues Ile912–Ala1195 form a malonyl-CoA:ACP transacylase (MAT) domain region. The active-site For acyl/malonyl transferase activity is Ser1003. The N-terminal hotdog fold stretch occupies residues Gln1293 to Leu1433. A PKS/mFAS DH domain is found at Gln1293–Gln1607. The product template (PT) domain stretch occupies residues Gly1304–Ala1604. The C-terminal hotdog fold stretch occupies residues Gln1459–Gln1607. The tract at residues Ser1615–Asp1650 is disordered. Over residues Arg1638–Val1649 the composition is skewed to basic and acidic residues. A Carrier domain is found at Val1649–Thr1726. Ser1686 carries the O-(pantetheine 4'-phosphoryl)serine modification. The segment at Ala1820–Ala1964 is thioesterase (TE) domain.

It functions in the pathway secondary metabolite biosynthesis. In terms of biological role, non-reducing polyketide synthase; part of the gene cluster that mediates the biosynthesis of radicicol, a resorcylic acid lactone (RAL) that irreversibly inhibits the HSP90 molecular chaperone, an important target for cancer chemotherapy. The radicicol cluster encodes only two apparent post-PKS enzymes, a cytochrome P450 monooxygenase (rdc4) and a non-heme halogenase (rdc2) that could introduce the epoxide and the chlorine, respectively. If this cluster includes all the genes required for radicicol biosynthesis, the remaining structural features of radicicol are presumably generated by the PKSs rdc1 and rdc5. The C-2' ketone could arise if the R-PKS rdc5 and NR-PKS rdc1 each carry out four iterations, in contrast to the five iteration-three iteration split for the hypothemycin PKSs. The origin of the cis 5',6' double bond is not known. The radicicol R-PKS rdc5 ER domain may catalyze either double bond isomerization or reduction in the third iteration. This Metacordyceps chlamydosporia (Nematophagous fungus) protein is Non-reducing polyketide synthase rdc1.